The chain runs to 868 residues: Protein translocase subunit SecA (868 aa).

ATP-binding positions include Q87, 105 to 109, and D500; that span reads GEGKT. Residues C849, C851, C860, and H861 each coordinate Zn(2+).

The protein belongs to the SecA family. In terms of assembly, monomer and homodimer. Part of the essential Sec protein translocation apparatus which comprises SecA, SecYEG and auxiliary proteins SecDF-YajC and YidC. Requires Zn(2+) as cofactor.

Its subcellular location is the cell membrane. The protein localises to the cytoplasm. The catalysed reaction is ATP + H2O + cellular proteinSide 1 = ADP + phosphate + cellular proteinSide 2.. Its function is as follows. Part of the Sec protein translocase complex. Interacts with the SecYEG preprotein conducting channel. Has a central role in coupling the hydrolysis of ATP to the transfer of proteins into and across the cell membrane, serving both as a receptor for the preprotein-SecB complex and as an ATP-driven molecular motor driving the stepwise translocation of polypeptide chains across the membrane. The sequence is that of Protein translocase subunit SecA from Wolbachia pipientis wMel.